Here is a 97-residue protein sequence, read N- to C-terminus: MMSAHKYELMFIADPELDERGLKKLTEQYLELVTKEGGSFDEPDYWGRRKLAYEIAGKTEGNYVVVKYTAEPATSDELDRVLNLNESVIRTKILRKG.

Belongs to the bacterial ribosomal protein bS6 family.

Its function is as follows. Binds together with bS18 to 16S ribosomal RNA. This chain is Small ribosomal subunit protein bS6, found in Bifidobacterium longum (strain NCC 2705).